A 190-amino-acid polypeptide reads, in one-letter code: Dynactin subunit 6 (190 aa).

Thr186 is subject to Phosphothreonine.

This sequence belongs to the dynactin subunits 5/6 family. Dynactin subunit 6 subfamily. As to quaternary structure, subunit of dynactin, a multiprotein complex part of a tripartite complex with dynein and a adapter, such as BICDL1, BICD2 or HOOK3. The dynactin complex is built around ACTR1A/ACTB filament and consists of an actin-related filament composed of a shoulder domain, a pointed end and a barbed end. Its length is defined by its flexible shoulder domain. The soulder is composed of 2 DCTN1 subunits, 4 DCTN2 and 2 DCTN3. The 4 DCNT2 (via N-terminus) bind the ACTR1A filament and act as molecular rulers to determine the length. The pointed end is important for binding dynein-dynactin cargo adapters. Consists of 4 subunits: ACTR10, DCNT4, DCTN5 and DCTN6. Within the complex DCTN6 forms a heterodimer with DCTN5. The barbed end is composed of a CAPZA1:CAPZB heterodimers, which binds ACTR1A/ACTB filament and dynactin and stabilizes dynactin. Interacts with PLK1. Interacts with N4BP2L1. In terms of processing, phosphorylation at Thr-186 by CDK1 during mitotic prometaphase creates a binding site for PLK1 that facilitates its recruitment to kinetochores.

It localises to the cytoplasm. The protein localises to the cytoskeleton. It is found in the chromosome. The protein resides in the centromere. Its subcellular location is the kinetochore. In terms of biological role, part of the dynactin complex that activates the molecular motor dynein for ultra-processive transport along microtubules. This chain is Dynactin subunit 6 (DCTN6), found in Sus scrofa (Pig).